Consider the following 209-residue polypeptide: Zinc finger SWIM domain-containing protein sws1 (209 aa).

Residues 1–30 (MQQGHFTSNSYHSKTLNSSSLPVSSKFSHT) are compositionally biased toward polar residues. A disordered region spans residues 1 to 33 (MQQGHFTSNSYHSKTLNSSSLPVSSKFSHTNDP). An SWIM-type zinc finger spans residues 143 to 203 (TTIDLKYWYC…HILAASILRA (61 aa)).

As to quaternary structure, interacts with rdl1, rlp1 and srs2.

Its subcellular location is the cytoplasm. The protein resides in the nucleus. It localises to the nucleoplasm. Functionally, involved in early stages of the homologous recombination repair (HRR) pathway of double-stranded DNA breaks arising during DNA replication or induced by DNA-damaging agents. In Schizosaccharomyces pombe (strain 972 / ATCC 24843) (Fission yeast), this protein is Zinc finger SWIM domain-containing protein sws1 (sws1).